We begin with the raw amino-acid sequence, 730 residues long: Propionyl-CoA carboxylase alpha chain, mitochondrial (730 aa).

The transit peptide at 1–52 directs the protein to the mitochondrion; sequence MAGLWVGGSVLVAAGRRGSRSPRPLMRSVALWTLKHVPQYSRQRLLVSRSLC. A Biotin carboxylation domain is found at 62–509; that stretch reads TFDKILIANR…NTKFLSDVYP (448 aa). At K65 the chain carries N6-acetyllysine; alternate. The residue at position 65 (K65) is an N6-succinyllysine; alternate. N6-succinyllysine is present on K119. N6-acetyllysine; alternate is present on K150. At K150 the chain carries N6-succinyllysine; alternate. The residue at position 154 (K154) is an N6-acetyllysine. K177 provides a ligand contact to ATP. One can recognise an ATP-grasp domain in the interval 181–378; it reads KLLAKKAKVN…LVQEMIRVAK (198 aa). K188 carries the post-translational modification N6-succinyllysine. K200 is subject to N6-acetyllysine; alternate. At K200 the chain carries N6-succinyllysine; alternate. Residues 209–270, E261, and N296 each bind ATP; that span reads AREI…PRHI. S252 bears the Phosphoserine mark. Residue K262 is modified to N6-succinyllysine. 3 residues coordinate Mg(2+): E336, E349, and N351. Mn(2+) is bound by residues E336, E349, and N351. Residue E349 is part of the active site. K407 carries the N6-succinyllysine modification. Residue F409 participates in biotin binding. An N6-succinyllysine mark is found at K502, K513, and K650. One can recognise a Biotinyl-binding domain in the interval 655–730; sequence KAAEDTSSIL…GEGDLLVELE (76 aa). Residue K696 is modified to N6-biotinyllysine.

As to quaternary structure, the holoenzyme is a dodecamer composed of 6 PCCA/alpha subunits and 6 PCCB/beta subunits. Interacts (via the biotin carboxylation domain) with SIRT4. Interacts with SIRT3 and SIRT5. Mg(2+) is required as a cofactor. Mn(2+) serves as cofactor. Requires biotin as cofactor. Post-translationally, acetylated. The biotin cofactor is covalently attached to the C-terminal biotinyl-binding domain and is required for the catalytic activity. Biotinylation is catalyzed by HLCS.

The protein resides in the mitochondrion matrix. The catalysed reaction is propanoyl-CoA + hydrogencarbonate + ATP = (S)-methylmalonyl-CoA + ADP + phosphate + H(+). It carries out the reaction butanoyl-CoA + hydrogencarbonate + ATP = (2S)-ethylmalonyl-CoA + ADP + phosphate + H(+). It participates in metabolic intermediate metabolism; propanoyl-CoA degradation; succinyl-CoA from propanoyl-CoA: step 1/3. This is one of the 2 subunits of the biotin-dependent propionyl-CoA carboxylase (PCC), a mitochondrial enzyme involved in the catabolism of odd chain fatty acids, branched-chain amino acids isoleucine, threonine, methionine, and valine and other metabolites. Propionyl-CoA carboxylase catalyzes the carboxylation of propionyl-CoA/propanoyl-CoA to D-methylmalonyl-CoA/(S)-methylmalonyl-CoA. Within the holoenzyme, the alpha subunit catalyzes the ATP-dependent carboxylation of the biotin carried by the biotin carboxyl carrier (BCC) domain, while the beta subunit then tranfers the carboxyl group from carboxylated biotin to propionyl-CoA. Propionyl-CoA carboxylase also significantly acts on butyryl-CoA/butanoyl-CoA, which is converted to ethylmalonyl-CoA/(2S)-ethylmalonyl-CoA at a much lower rate. Other alternative minor substrates include (2E)-butenoyl-CoA/crotonoyl-CoA. This is Propionyl-CoA carboxylase alpha chain, mitochondrial from Sus scrofa (Pig).